A 61-amino-acid polypeptide reads, in one-letter code: Large ribosomal subunit protein uL30 (61 aa).

It belongs to the universal ribosomal protein uL30 family. In terms of assembly, part of the 50S ribosomal subunit.

This is Large ribosomal subunit protein uL30 from Francisella philomiragia subsp. philomiragia (strain ATCC 25017 / CCUG 19701 / FSC 153 / O#319-036).